A 445-amino-acid chain; its full sequence is Phosphoglucosamine mutase (445 aa).

Catalysis depends on S102, which acts as the Phosphoserine intermediate. Mg(2+)-binding residues include S102, D241, D243, and D245. At S102 the chain carries Phosphoserine.

It belongs to the phosphohexose mutase family. Mg(2+) is required as a cofactor. Post-translationally, activated by phosphorylation.

It catalyses the reaction alpha-D-glucosamine 1-phosphate = D-glucosamine 6-phosphate. Functionally, catalyzes the conversion of glucosamine-6-phosphate to glucosamine-1-phosphate. This is Phosphoglucosamine mutase from Edwardsiella ictaluri (strain 93-146).